Reading from the N-terminus, the 729-residue chain is Fatty acid oxidation complex subunit alpha (729 aa).

Residues 1–189 form an enoyl-CoA hydratase/isomerase region; it reads MLYQSETLQL…KIGLVDAVVD (189 aa). D296 is a binding site for substrate. A 3-hydroxyacyl-CoA dehydrogenase region spans residues 311-729; it reads AAPKLAAVLG…LLDVSTNQPA (419 aa). NAD(+)-binding positions include M324, D343, 400 to 402, K407, and S429; that span reads VVE. Residue H450 is the For 3-hydroxyacyl-CoA dehydrogenase activity of the active site. N453 is a binding site for NAD(+). N500 and Y660 together coordinate substrate.

The protein in the N-terminal section; belongs to the enoyl-CoA hydratase/isomerase family. In the C-terminal section; belongs to the 3-hydroxyacyl-CoA dehydrogenase family. As to quaternary structure, heterotetramer of two alpha chains (FadB) and two beta chains (FadA).

It carries out the reaction a (3S)-3-hydroxyacyl-CoA + NAD(+) = a 3-oxoacyl-CoA + NADH + H(+). It catalyses the reaction a (3S)-3-hydroxyacyl-CoA = a (2E)-enoyl-CoA + H2O. The catalysed reaction is a 4-saturated-(3S)-3-hydroxyacyl-CoA = a (3E)-enoyl-CoA + H2O. The enzyme catalyses (3S)-3-hydroxybutanoyl-CoA = (3R)-3-hydroxybutanoyl-CoA. It carries out the reaction a (3Z)-enoyl-CoA = a 4-saturated (2E)-enoyl-CoA. It catalyses the reaction a (3E)-enoyl-CoA = a 4-saturated (2E)-enoyl-CoA. Its pathway is lipid metabolism; fatty acid beta-oxidation. Involved in the aerobic and anaerobic degradation of long-chain fatty acids via beta-oxidation cycle. Catalyzes the formation of 3-oxoacyl-CoA from enoyl-CoA via L-3-hydroxyacyl-CoA. It can also use D-3-hydroxyacyl-CoA and cis-3-enoyl-CoA as substrate. This chain is Fatty acid oxidation complex subunit alpha, found in Yersinia pseudotuberculosis serotype O:1b (strain IP 31758).